The chain runs to 206 residues: Small ribosomal subunit protein uS4 (206 aa).

The 62-residue stretch at 96 to 157 (SRLDNVVYRM…KAQKQLRVQA (62 aa)) folds into the S4 RNA-binding domain.

This sequence belongs to the universal ribosomal protein uS4 family. As to quaternary structure, part of the 30S ribosomal subunit. Contacts protein S5. The interaction surface between S4 and S5 is involved in control of translational fidelity.

Its function is as follows. One of the primary rRNA binding proteins, it binds directly to 16S rRNA where it nucleates assembly of the body of the 30S subunit. Functionally, with S5 and S12 plays an important role in translational accuracy. In Alkalilimnicola ehrlichii (strain ATCC BAA-1101 / DSM 17681 / MLHE-1), this protein is Small ribosomal subunit protein uS4.